We begin with the raw amino-acid sequence, 89 residues long: Small capsomere-interacting protein (89 aa).

The interval 1 to 31 (MTTIRGDDLSNQITQISGSSSKKEEEKKKQQ) is disordered. The segment covering 9–18 (LSNQITQISG) has biased composition (polar residues).

Belongs to the herpesviridae small capsomere-interacting protein family. In terms of assembly, interacts with the major capsid protein/MCP.

The protein localises to the virion. The protein resides in the host nucleus. In terms of biological role, participates in the assembly of the infectious particles by decorating the outer surface of the capsid shell and thus forming a layer between the capsid and the tegument. Complexes composed of the major capsid protein and small capsomere-interacting protein/SCP assemble together in the host cytoplasm and are translocated to the nucleus, where they accumulate and participate in capsid assembly. In Human herpesvirus 6B (HHV-6 variant B), this protein is Small capsomere-interacting protein.